The primary structure comprises 267 residues: MKFTVASRGDTLSDELCDTIKTRLLAADLAHDSDKPDIVITVGGDGTFLEAFHSYAHRLEETAFVGIHTGHLGFYADWVPEETEHLITHIIKTPFQIVEYPLLEVVIRYRGGQREPRRHLALNESTIKSTEGSLVCTVEIKGEAFETFRGDGLCMSTPSGSTAYNKALGGAILHPSLASIQLSEMASINNRIYRTLGSPLVLPQHHTCLLKLLNDVSVQVTIDHFNVPVFAENVDTIQVRVAEEKVRFARFRPFPFWKRVKEAFISE.

The active-site Proton acceptor is D45. Residues 45–46 (DG), 123–124 (NE), R149, D151, A186, and N226 each bind NAD(+).

Belongs to the NAD kinase family. A divalent metal cation is required as a cofactor.

The protein localises to the cytoplasm. It carries out the reaction NAD(+) + ATP = ADP + NADP(+) + H(+). Involved in the regulation of the intracellular balance of NAD and NADP, and is a key enzyme in the biosynthesis of NADP. Catalyzes specifically the phosphorylation on 2'-hydroxyl of the adenosine moiety of NAD to yield NADP. This chain is NAD kinase, found in Shouchella clausii (strain KSM-K16) (Alkalihalobacillus clausii).